Here is a 212-residue protein sequence, read N- to C-terminus: Phosphatidylserine decarboxylase proenzyme (212 aa).

Catalysis depends on serine 182, which acts as the Schiff-base intermediate with substrate; via pyruvic acid. Pyruvic acid (Ser); by autocatalysis is present on serine 182.

This sequence belongs to the phosphatidylserine decarboxylase family. PSD-A subfamily. Heterodimer of a large membrane-associated beta subunit and a small pyruvoyl-containing alpha subunit. Pyruvate serves as cofactor. Is synthesized initially as an inactive proenzyme. Formation of the active enzyme involves a self-maturation process in which the active site pyruvoyl group is generated from an internal serine residue via an autocatalytic post-translational modification. Two non-identical subunits are generated from the proenzyme in this reaction, and the pyruvate is formed at the N-terminus of the alpha chain, which is derived from the carboxyl end of the proenzyme. The post-translation cleavage follows an unusual pathway, termed non-hydrolytic serinolysis, in which the side chain hydroxyl group of the serine supplies its oxygen atom to form the C-terminus of the beta chain, while the remainder of the serine residue undergoes an oxidative deamination to produce ammonia and the pyruvoyl prosthetic group on the alpha chain.

Its subcellular location is the cell membrane. The catalysed reaction is a 1,2-diacyl-sn-glycero-3-phospho-L-serine + H(+) = a 1,2-diacyl-sn-glycero-3-phosphoethanolamine + CO2. It participates in phospholipid metabolism; phosphatidylethanolamine biosynthesis; phosphatidylethanolamine from CDP-diacylglycerol: step 2/2. Functionally, catalyzes the formation of phosphatidylethanolamine (PtdEtn) from phosphatidylserine (PtdSer). The sequence is that of Phosphatidylserine decarboxylase proenzyme from Chlorobium chlorochromatii (strain CaD3).